The primary structure comprises 247 residues: Probable transcriptional regulatory protein lpl1249 (247 aa).

This sequence belongs to the TACO1 family.

Its subcellular location is the cytoplasm. This is Probable transcriptional regulatory protein lpl1249 from Legionella pneumophila (strain Lens).